The chain runs to 128 residues: NHP2-like protein 1 (128 aa).

Positions 36 to 48 (RKGANEATKTLNR) are interaction with U4 snRNA and U4atac snRNA. Residues 96 to 128 (SRPVIACAVTIKEGSQLKPQIQSLQQSIERLLV) form an important for U4 snRNA-binding region.

The protein belongs to the eukaryotic ribosomal protein eL8 family. As to quaternary structure, identified in the spliceosome B complex. Component of the U4/U6-U5 tri-snRNP complex. Part of the small subunit (SSU) processome, composed of more than 70 proteins and the RNA chaperone small nucleolar RNA (snoRNA) U3.

The protein resides in the nucleus. It localises to the nucleolus. Its function is as follows. Part of the small subunit (SSU) processome, first precursor of the small eukaryotic ribosomal subunit. During the assembly of the SSU processome in the nucleolus, many ribosome biogenesis factors, an RNA chaperone and ribosomal proteins associate with the nascent pre-rRNA and work in concert to generate RNA folding, modifications, rearrangements and cleavage as well as targeted degradation of pre-ribosomal RNA by the RNA exosome. Involved in pre-mRNA splicing as component of the spliceosome. Binds to the 5'-stem-loop of U4 snRNA and thereby contributes to spliceosome assembly. The protein undergoes a conformational change upon RNA-binding. Core component of box C/D small nucleolar ribonucleoprotein (snoRNP) complexes that function in methylation of multiple sites on ribosomal RNAs (rRNAs) and messenger RNAs (mRNAs). This Xenopus tropicalis (Western clawed frog) protein is NHP2-like protein 1.